The following is a 313-amino-acid chain: Cytochrome f (313 aa).

The first 31 residues, 1–31, serve as a signal peptide directing secretion; sequence MQNMFSFLSNKKIIALFLIIGTIFMPLSSEA. Residues Tyr32, Cys52, Cys55, and His56 each coordinate heme. A helical membrane pass occupies residues 279–298; that stretch reads IKWLIAFLILSTLGQVFLVL.

It belongs to the cytochrome f family. In terms of assembly, the 4 large subunits of the cytochrome b6-f complex are cytochrome b6, subunit IV (17 kDa polypeptide, petD), cytochrome f and the Rieske protein, while the 4 small subunits are PetG, PetL, PetM and PetN. The complex functions as a dimer. It depends on heme as a cofactor.

The protein resides in the plastid. Its subcellular location is the chloroplast thylakoid membrane. In terms of biological role, component of the cytochrome b6-f complex, which mediates electron transfer between photosystem II (PSII) and photosystem I (PSI), cyclic electron flow around PSI, and state transitions. The chain is Cytochrome f (petA) from Mesostigma viride (Green alga).